The following is a 142-amino-acid chain: Prefoldin subunit alpha 1 (142 aa).

Belongs to the prefoldin subunit alpha family. As to quaternary structure, heterohexamer of two alpha and four beta subunits.

Its subcellular location is the cytoplasm. Molecular chaperone capable of stabilizing a range of proteins. Seems to fulfill an ATP-independent, HSP70-like function in archaeal de novo protein folding. The sequence is that of Prefoldin subunit alpha 1 (pfdA1) from Methanocaldococcus jannaschii (strain ATCC 43067 / DSM 2661 / JAL-1 / JCM 10045 / NBRC 100440) (Methanococcus jannaschii).